A 197-amino-acid polypeptide reads, in one-letter code: CASP-like protein 1B1 (197 aa).

At A2 the chain carries N-acetylalanine. Residues 2–17 (AVSKLTLAATSGKSCK) lie on the Cytoplasmic side of the membrane. Residues 18–38 (ILLGLRLLAFSATLSAAIVMG) traverse the membrane as a helical segment. Over 39–69 (LNKETKTFIVGKVGNTPIQATFTAKFDHTPA) the chain is Extracellular. Residues 70–90 (FVFFVVANAMVSFHNLLMIAL) form a helical membrane-spanning segment. The Cytoplasmic segment spans residues 91–106 (QIFGGKMEFTGFRLLS). The chain crosses the membrane as a helical span at residues 107–127 (VAILDMLNVTLISAAANAAAF). The Extracellular segment spans residues 128-156 (MAEVGKNGNKHARWDKICDRFATYCDHGA). A helical transmembrane segment spans residues 157 to 177 (GALIAAFAGVILMLIISAASI). Residues 178–197 (SRLVQPNKCCSTTASPSVVP) are Cytoplasmic-facing.

This sequence belongs to the Casparian strip membrane proteins (CASP) family. Homodimer and heterodimers.

It is found in the cell membrane. The protein is CASP-like protein 1B1 of Arabidopsis thaliana (Mouse-ear cress).